We begin with the raw amino-acid sequence, 400 residues long: tRNA(Ile)-lysidine synthase (400 aa).

20–25 is a binding site for ATP; it reads SGGLDS.

This sequence belongs to the tRNA(Ile)-lysidine synthase family.

Its subcellular location is the cytoplasm. The catalysed reaction is cytidine(34) in tRNA(Ile2) + L-lysine + ATP = lysidine(34) in tRNA(Ile2) + AMP + diphosphate + H(+). In terms of biological role, ligates lysine onto the cytidine present at position 34 of the AUA codon-specific tRNA(Ile) that contains the anticodon CAU, in an ATP-dependent manner. Cytidine is converted to lysidine, thus changing the amino acid specificity of the tRNA from methionine to isoleucine. The sequence is that of tRNA(Ile)-lysidine synthase from Wigglesworthia glossinidia brevipalpis.